We begin with the raw amino-acid sequence, 128 residues long: Ribosome-binding factor A (128 aa).

This sequence belongs to the RbfA family. In terms of assembly, monomer. Binds 30S ribosomal subunits, but not 50S ribosomal subunits or 70S ribosomes.

The protein resides in the cytoplasm. Its function is as follows. One of several proteins that assist in the late maturation steps of the functional core of the 30S ribosomal subunit. Associates with free 30S ribosomal subunits (but not with 30S subunits that are part of 70S ribosomes or polysomes). Required for efficient processing of 16S rRNA. May interact with the 5'-terminal helix region of 16S rRNA. The chain is Ribosome-binding factor A from Haemophilus influenzae (strain ATCC 51907 / DSM 11121 / KW20 / Rd).